Consider the following 95-residue polypeptide: Small ubiquitin-related modifier 4 (95 aa).

One can recognise a Ubiquitin-like domain in the interval 17-95; sequence HINLKVAGQD…VLQQQTGGVY (79 aa). Gly93 participates in a covalent cross-link: Glycyl lysine isopeptide (Gly-Lys) (interchain with K-? in acceptor proteins). Residues 94–95 constitute a propeptide that is removed on maturation; it reads VY.

This sequence belongs to the ubiquitin family. SUMO subfamily. As to quaternary structure, interacts with SAE2. Covalently attached to a number of proteins.

Its function is as follows. Ubiquitin-like protein which can be covalently attached to target lysines as a monomer. Does not seem to be involved in protein degradation and may modulate protein subcellular localization, stability or activity. Upon oxidative stress, conjugates to various anti-oxidant enzymes, chaperones, and stress defense proteins. May also conjugate to NFKBIA, TFAP2A and FOS, negatively regulating their transcriptional activity, and to NR3C1, positively regulating its transcriptional activity. Covalent attachment to its substrates requires prior activation by the E1 complex SAE1-SAE2 and linkage to the E2 enzyme UBE2I. The polypeptide is Small ubiquitin-related modifier 4 (SUMO4) (Sus scrofa (Pig)).